The primary structure comprises 284 residues: Protease HtpX homolog (284 aa).

The next 2 helical transmembrane spans lie at 7–26 and 33–47; these read TYLL…MMLH and IILA…YYMS. H129 contacts Zn(2+). E130 is an active-site residue. Position 133 (H133) interacts with Zn(2+). Helical transmembrane passes span 148–168 and 180–200; these read LAGA…IFFV and IGTI…QFAI. A Zn(2+)-binding site is contributed by E205.

This sequence belongs to the peptidase M48B family. Zn(2+) is required as a cofactor.

It is found in the cell membrane. This chain is Protease HtpX homolog, found in Methanocaldococcus jannaschii (strain ATCC 43067 / DSM 2661 / JAL-1 / JCM 10045 / NBRC 100440) (Methanococcus jannaschii).